The primary structure comprises 90 residues: Small ribosomal subunit protein uS15c (90 aa).

This sequence belongs to the universal ribosomal protein uS15 family. Part of the 30S ribosomal subunit.

The protein localises to the plastid. It is found in the chloroplast. The sequence is that of Small ribosomal subunit protein uS15c (rps15-A) from Hordeum vulgare (Barley).